A 231-amino-acid polypeptide reads, in one-letter code: Orotidine 5'-phosphate decarboxylase (231 aa).

Substrate contacts are provided by residues aspartate 11, lysine 34, 61–70 (DLKLHDIPNT), threonine 117, arginine 179, glutamine 188, glycine 208, and arginine 209. Lysine 63 functions as the Proton donor in the catalytic mechanism.

This sequence belongs to the OMP decarboxylase family. Type 1 subfamily. In terms of assembly, homodimer.

The catalysed reaction is orotidine 5'-phosphate + H(+) = UMP + CO2. The protein operates within pyrimidine metabolism; UMP biosynthesis via de novo pathway; UMP from orotate: step 2/2. Catalyzes the decarboxylation of orotidine 5'-monophosphate (OMP) to uridine 5'-monophosphate (UMP). This is Orotidine 5'-phosphate decarboxylase from Streptococcus suis (strain 98HAH33).